A 450-amino-acid polypeptide reads, in one-letter code: MSNLKISDRFVKPFLDQSKLEKELERAEMARQTVLNGSGLGNEFLGWVNLPSQTKAEDLQNIRKAAELIQSHSQYLVVVGIGGSYLGARAVIEALTPEFSTPETQKKTVKILYAGHHLDADYHFRLLAFLENKEFSVNVISKSGTTTEPAIAFRLLLSLLERKYGKENIKHRVFATTDRSKGALKHLADEYKFPTFVIPDDVGGRYSVFTPVGLLPIAAAGFSINKLMDGAKQMESELKSTASKDGNLACFYAAIRNGLYSLGKTTEIFVSYNPSFGYVSEWWKQLFGESEGKNGKGIFPASVQFTTDLHSMGQYIQDGERKLMETVIKVEAPKQDVYLTEKTDDNDGLNYLAGKKLSEVNQSAMLGTLIAHKDGGVPCLEITLPSINEETLGELLYFYEFSCAVSGYMLGVNPFDQPGVEDYKNNMFALLGKKGYEKRKEEILSHLGFS.

Glutamate 289 acts as the Proton donor in catalysis. Active-site residues include histidine 310 and lysine 424.

Belongs to the GPI family.

The protein resides in the cytoplasm. It catalyses the reaction alpha-D-glucose 6-phosphate = beta-D-fructose 6-phosphate. The protein operates within carbohydrate biosynthesis; gluconeogenesis. It functions in the pathway carbohydrate degradation; glycolysis; D-glyceraldehyde 3-phosphate and glycerone phosphate from D-glucose: step 2/4. Functionally, catalyzes the reversible isomerization of glucose-6-phosphate to fructose-6-phosphate. This is Glucose-6-phosphate isomerase from Leptospira biflexa serovar Patoc (strain Patoc 1 / Ames).